We begin with the raw amino-acid sequence, 328 residues long: MPLHHLTRFPRLELIGAPTPLEYLPRLSDYLGREIYIKRDDVTPIAMGGNKLRKLEFLVADALREGADTLITAGAIQSNHVRQTVAVAAKLGLHCVALLENPIGTTAENYLTNGNRLLLDLFNTQIEMCDALTDPDAQLQTLATRIEAQGFRPYVIPVGGSSALGAMGYVESALEIAQQCAEVVGLSSVVVASGSAGTHAGLAVGLEHLMPDVELIGVTVSRSVAEQKPRVISLQQAIAGQLALTATADIHLWDDYFAPGYGVPNDAGMEAVKLLASLEGVLLDPVYTGKAMAGLIDGISQKRFNDDGPILFIHTGGAPALFAYHPHV.

Lys51 bears the N6-(pyridoxal phosphate)lysine mark.

It belongs to the ACC deaminase/D-cysteine desulfhydrase family. Homodimer. Pyridoxal 5'-phosphate serves as cofactor.

It catalyses the reaction D-cysteine + H2O = hydrogen sulfide + pyruvate + NH4(+) + H(+). Functionally, catalyzes the alpha,beta-elimination reaction of D-cysteine and of several D-cysteine derivatives. It could be a defense mechanism against D-cysteine. The sequence is that of D-cysteine desulfhydrase from Salmonella paratyphi C (strain RKS4594).